A 202-amino-acid chain; its full sequence is Nucleoside triphosphate pyrophosphatase (202 aa).

Catalysis depends on Asp79, which acts as the Proton acceptor.

The protein belongs to the Maf family. The cofactor is a divalent metal cation.

Its subcellular location is the cytoplasm. It carries out the reaction a ribonucleoside 5'-triphosphate + H2O = a ribonucleoside 5'-phosphate + diphosphate + H(+). It catalyses the reaction a 2'-deoxyribonucleoside 5'-triphosphate + H2O = a 2'-deoxyribonucleoside 5'-phosphate + diphosphate + H(+). Nucleoside triphosphate pyrophosphatase. May have a dual role in cell division arrest and in preventing the incorporation of modified nucleotides into cellular nucleic acids. This is Nucleoside triphosphate pyrophosphatase from Rhodopseudomonas palustris (strain BisB18).